The sequence spans 400 residues: Protein transport protein HofC homolog (400 aa).

The next 3 membrane-spanning stretches (helical) occupy residues tyrosine 165 to leucine 185, leucine 209 to isoleucine 229, and leucine 370 to phenylalanine 390.

It belongs to the GSP F family.

The protein localises to the cell inner membrane. This Escherichia coli (strain K12) protein is Protein transport protein HofC homolog (hofC).